We begin with the raw amino-acid sequence, 388 residues long: Non-structural maintenance of chromosome element 5 (388 aa).

As to quaternary structure, component of the smc5/smc6 complex which consists of two subcomplexes, smc5-smc6-nse2 and nse1-nse2-nse4. Interacts with nse6 and rfp1.

It localises to the cytoplasm. The protein localises to the nucleus. Its subcellular location is the chromosome. Its function is as follows. Acts in a DNA repair pathway for removal of UV-induced DNA damage that is distinct from classical nucleotide excision repair and in repair of ionizing radiation damage. Functions in homologous recombination repair of DNA double strand breaks and in recovery of stalled replication forks. May prevent formation of excessive Holliday junctions or assist in their resolution. This Schizosaccharomyces pombe (strain 972 / ATCC 24843) (Fission yeast) protein is Non-structural maintenance of chromosome element 5 (nse5).